The primary structure comprises 81 residues: Photosystem I iron-sulfur center (81 aa).

2 consecutive 4Fe-4S ferredoxin-type domains span residues 2 to 31 and 39 to 68; these read AHSV…MVPW and IASA…VRVY. Cys-11, Cys-14, Cys-17, Cys-21, Cys-48, Cys-51, Cys-54, and Cys-58 together coordinate [4Fe-4S] cluster.

In terms of assembly, the eukaryotic PSI reaction center is composed of at least 11 subunits. [4Fe-4S] cluster serves as cofactor.

The protein localises to the plastid. The protein resides in the chloroplast thylakoid membrane. The enzyme catalyses reduced [plastocyanin] + hnu + oxidized [2Fe-2S]-[ferredoxin] = oxidized [plastocyanin] + reduced [2Fe-2S]-[ferredoxin]. Its function is as follows. Apoprotein for the two 4Fe-4S centers FA and FB of photosystem I (PSI); essential for photochemical activity. FB is the terminal electron acceptor of PSI, donating electrons to ferredoxin. The C-terminus interacts with PsaA/B/D and helps assemble the protein into the PSI complex. Required for binding of PsaD and PsaE to PSI. PSI is a plastocyanin-ferredoxin oxidoreductase, converting photonic excitation into a charge separation, which transfers an electron from the donor P700 chlorophyll pair to the spectroscopically characterized acceptors A0, A1, FX, FA and FB in turn. The chain is Photosystem I iron-sulfur center from Chlorokybus atmophyticus (Soil alga).